The chain runs to 509 residues: Bifunctional purine biosynthesis protein PurH (509 aa).

The MGS-like domain occupies methionine 1–valine 144.

The protein belongs to the PurH family.

The enzyme catalyses (6R)-10-formyltetrahydrofolate + 5-amino-1-(5-phospho-beta-D-ribosyl)imidazole-4-carboxamide = 5-formamido-1-(5-phospho-D-ribosyl)imidazole-4-carboxamide + (6S)-5,6,7,8-tetrahydrofolate. It carries out the reaction IMP + H2O = 5-formamido-1-(5-phospho-D-ribosyl)imidazole-4-carboxamide. It functions in the pathway purine metabolism; IMP biosynthesis via de novo pathway; 5-formamido-1-(5-phospho-D-ribosyl)imidazole-4-carboxamide from 5-amino-1-(5-phospho-D-ribosyl)imidazole-4-carboxamide (10-formyl THF route): step 1/1. The protein operates within purine metabolism; IMP biosynthesis via de novo pathway; IMP from 5-formamido-1-(5-phospho-D-ribosyl)imidazole-4-carboxamide: step 1/1. This Listeria innocua serovar 6a (strain ATCC BAA-680 / CLIP 11262) protein is Bifunctional purine biosynthesis protein PurH.